The sequence spans 259 residues: 5'-nucleotidase SurE (259 aa).

A divalent metal cation-binding residues include aspartate 8, aspartate 9, serine 39, and asparagine 93.

This sequence belongs to the SurE nucleotidase family. A divalent metal cation is required as a cofactor.

The protein resides in the cytoplasm. The enzyme catalyses a ribonucleoside 5'-phosphate + H2O = a ribonucleoside + phosphate. In terms of biological role, nucleotidase that shows phosphatase activity on nucleoside 5'-monophosphates. This Thermococcus kodakarensis (strain ATCC BAA-918 / JCM 12380 / KOD1) (Pyrococcus kodakaraensis (strain KOD1)) protein is 5'-nucleotidase SurE.